The primary structure comprises 484 residues: tRNA sulfurtransferase (484 aa).

Residues 63-167 (EAFGERLACI…NDNLYLIDKR (105 aa)) form the THUMP domain. ATP contacts are provided by residues 185-186 (LI), K267, G289, and Q298. A disulfide bridge links C346 with C458. Residues 406–484 (INANEIIIDV…GYTNVKVYRP (79 aa)) enclose the Rhodanese domain. C458 acts as the Cysteine persulfide intermediate in catalysis.

This sequence belongs to the ThiI family.

It is found in the cytoplasm. It catalyses the reaction [ThiI sulfur-carrier protein]-S-sulfanyl-L-cysteine + a uridine in tRNA + 2 reduced [2Fe-2S]-[ferredoxin] + ATP + H(+) = [ThiI sulfur-carrier protein]-L-cysteine + a 4-thiouridine in tRNA + 2 oxidized [2Fe-2S]-[ferredoxin] + AMP + diphosphate. The enzyme catalyses [ThiS sulfur-carrier protein]-C-terminal Gly-Gly-AMP + S-sulfanyl-L-cysteinyl-[cysteine desulfurase] + AH2 = [ThiS sulfur-carrier protein]-C-terminal-Gly-aminoethanethioate + L-cysteinyl-[cysteine desulfurase] + A + AMP + 2 H(+). It functions in the pathway cofactor biosynthesis; thiamine diphosphate biosynthesis. Functionally, catalyzes the ATP-dependent transfer of a sulfur to tRNA to produce 4-thiouridine in position 8 of tRNAs, which functions as a near-UV photosensor. Also catalyzes the transfer of sulfur to the sulfur carrier protein ThiS, forming ThiS-thiocarboxylate. This is a step in the synthesis of thiazole, in the thiamine biosynthesis pathway. The sulfur is donated as persulfide by IscS. This chain is tRNA sulfurtransferase, found in Shewanella halifaxensis (strain HAW-EB4).